The sequence spans 248 residues: ATP synthase subunit a, chloroplastic (248 aa).

The next 5 membrane-spanning stretches (helical) occupy residues 38 to 58 (QVLL…TIAV), 96 to 116 (VPFI…GALL), 135 to 155 (INTT…AGLT), 200 to 220 (LVVA…VMFL), and 221 to 241 (GLFT…AYIG).

Belongs to the ATPase A chain family. F-type ATPases have 2 components, CF(1) - the catalytic core - and CF(0) - the membrane proton channel. CF(1) has five subunits: alpha(3), beta(3), gamma(1), delta(1), epsilon(1). CF(0) has four main subunits: a, b, b' and c.

The protein localises to the plastid. The protein resides in the chloroplast thylakoid membrane. Key component of the proton channel; it plays a direct role in the translocation of protons across the membrane. The polypeptide is ATP synthase subunit a, chloroplastic (Pinus thunbergii (Japanese black pine)).